The chain runs to 36 residues: uncharacterized protein (36 aa).

This is an uncharacterized protein from Enterobacteria phage T4 (Bacteriophage T4).